Here is a 429-residue protein sequence, read N- to C-terminus: Histidinol dehydrogenase (429 aa).

NAD(+)-binding residues include tyrosine 131, glutamine 193, and asparagine 216. Substrate-binding residues include serine 239, glutamine 261, and histidine 264. 2 residues coordinate Zn(2+): glutamine 261 and histidine 264. Residues glutamate 327 and histidine 328 each act as proton acceptor in the active site. Substrate contacts are provided by histidine 328, aspartate 361, glutamate 415, and histidine 420. Aspartate 361 is a Zn(2+) binding site. Histidine 420 is a Zn(2+) binding site.

This sequence belongs to the histidinol dehydrogenase family. Requires Zn(2+) as cofactor.

The catalysed reaction is L-histidinol + 2 NAD(+) + H2O = L-histidine + 2 NADH + 3 H(+). The protein operates within amino-acid biosynthesis; L-histidine biosynthesis; L-histidine from 5-phospho-alpha-D-ribose 1-diphosphate: step 9/9. Its function is as follows. Catalyzes the sequential NAD-dependent oxidations of L-histidinol to L-histidinaldehyde and then to L-histidine. This Methanocaldococcus jannaschii (strain ATCC 43067 / DSM 2661 / JAL-1 / JCM 10045 / NBRC 100440) (Methanococcus jannaschii) protein is Histidinol dehydrogenase (hisD).